A 204-amino-acid polypeptide reads, in one-letter code: MAGSRRKSPGITPEILLRAYSIGLFPMAESADDPEIFWVEPELRGVLPLDHFHLSKSLAKTVRRKPFEIRFDHAFDSVIAACAEETSGRPSTWINKTIRSLYATLFDMGHAHTVEAWDGDKLVGGLYGVSLGSAFFGESMFSRRTDASKICLVHLVERLRERGFTLLDTQFTTEHLKTFGAIDVAKADYAVMLAAAMQSPHLKF.

It belongs to the L/F-transferase family.

The protein resides in the cytoplasm. The catalysed reaction is N-terminal L-lysyl-[protein] + L-leucyl-tRNA(Leu) = N-terminal L-leucyl-L-lysyl-[protein] + tRNA(Leu) + H(+). It catalyses the reaction N-terminal L-arginyl-[protein] + L-leucyl-tRNA(Leu) = N-terminal L-leucyl-L-arginyl-[protein] + tRNA(Leu) + H(+). The enzyme catalyses L-phenylalanyl-tRNA(Phe) + an N-terminal L-alpha-aminoacyl-[protein] = an N-terminal L-phenylalanyl-L-alpha-aminoacyl-[protein] + tRNA(Phe). In terms of biological role, functions in the N-end rule pathway of protein degradation where it conjugates Leu, Phe and, less efficiently, Met from aminoacyl-tRNAs to the N-termini of proteins containing an N-terminal arginine or lysine. The sequence is that of Leucyl/phenylalanyl-tRNA--protein transferase from Rhizobium leguminosarum bv. trifolii (strain WSM2304).